The chain runs to 485 residues: N-succinylglutamate 5-semialdehyde dehydrogenase (485 aa).

220-225 (GSANTG) is an NAD(+) binding site. Active-site residues include Glu243 and Cys278.

This sequence belongs to the aldehyde dehydrogenase family. AstD subfamily.

It carries out the reaction N-succinyl-L-glutamate 5-semialdehyde + NAD(+) + H2O = N-succinyl-L-glutamate + NADH + 2 H(+). It functions in the pathway amino-acid degradation; L-arginine degradation via AST pathway; L-glutamate and succinate from L-arginine: step 4/5. Its function is as follows. Catalyzes the NAD-dependent reduction of succinylglutamate semialdehyde into succinylglutamate. The protein is N-succinylglutamate 5-semialdehyde dehydrogenase of Vibrio campbellii (strain ATCC BAA-1116).